We begin with the raw amino-acid sequence, 234 residues long: Zein-alpha A30 (234 aa).

A signal peptide spans 1–21; it reads MAAKIFCLLMLLGLSASAATA.

It belongs to the zein family.

Its function is as follows. Zeins are major seed storage proteins. The protein is Zein-alpha A30 of Zea mays (Maize).